Consider the following 451-residue polypeptide: NADP-specific glutamate dehydrogenase (451 aa).

The active site involves K113. The residue at position 252 (S252) is a Phosphoserine.

The protein belongs to the Glu/Leu/Phe/Val dehydrogenases family. In terms of assembly, homohexamer.

It catalyses the reaction L-glutamate + NADP(+) + H2O = 2-oxoglutarate + NH4(+) + NADPH + H(+). This is NADP-specific glutamate dehydrogenase (gdh1) from Schizosaccharomyces pombe (strain 972 / ATCC 24843) (Fission yeast).